The following is a 209-amino-acid chain: 3-hexulose-6-phosphate synthase (209 aa).

Belongs to the HPS/KGPDC family. HPS subfamily. As to quaternary structure, homodimer.

It carries out the reaction D-ribulose 5-phosphate + formaldehyde = D-arabino-hex-3-ulose 6-phosphate. Its pathway is one-carbon metabolism; formaldehyde assimilation via RuMP pathway; D-fructose 6-phosphate from D-ribulose 5-phosphate and formaldehyde: step 1/2. In terms of biological role, catalyzes the condensation of ribulose 5-phosphate with formaldehyde to form 3-hexulose 6-phosphate. The polypeptide is 3-hexulose-6-phosphate synthase (rmpA) (Methylomonas aminofaciens).